A 164-amino-acid chain; its full sequence is Large ribosomal subunit protein bL19 (164 aa).

The disordered stretch occupies residues 144-164 (EAEKQTEVQAEPKIEKSEEKK).

The protein belongs to the bacterial ribosomal protein bL19 family.

In terms of biological role, this protein is located at the 30S-50S ribosomal subunit interface and may play a role in the structure and function of the aminoacyl-tRNA binding site. This chain is Large ribosomal subunit protein bL19, found in Pelagibacter ubique (strain HTCC1062).